The sequence spans 298 residues: Lipoyl synthase (298 aa).

Residues Cys-40, Cys-45, Cys-51, Cys-67, Cys-71, Cys-74, and Ser-280 each coordinate [4Fe-4S] cluster. The 217-residue stretch at 53–269 folds into the Radical SAM core domain; the sequence is AVRKTATFMI…KEIALSKGFS (217 aa).

The protein belongs to the radical SAM superfamily. Lipoyl synthase family. [4Fe-4S] cluster serves as cofactor.

It is found in the cytoplasm. It catalyses the reaction [[Fe-S] cluster scaffold protein carrying a second [4Fe-4S](2+) cluster] + N(6)-octanoyl-L-lysyl-[protein] + 2 oxidized [2Fe-2S]-[ferredoxin] + 2 S-adenosyl-L-methionine + 4 H(+) = [[Fe-S] cluster scaffold protein] + N(6)-[(R)-dihydrolipoyl]-L-lysyl-[protein] + 4 Fe(3+) + 2 hydrogen sulfide + 2 5'-deoxyadenosine + 2 L-methionine + 2 reduced [2Fe-2S]-[ferredoxin]. It participates in protein modification; protein lipoylation via endogenous pathway; protein N(6)-(lipoyl)lysine from octanoyl-[acyl-carrier-protein]. Its function is as follows. Catalyzes the radical-mediated insertion of two sulfur atoms into the C-6 and C-8 positions of the octanoyl moiety bound to the lipoyl domains of lipoate-dependent enzymes, thereby converting the octanoylated domains into lipoylated derivatives. This Bacillus cytotoxicus (strain DSM 22905 / CIP 110041 / 391-98 / NVH 391-98) protein is Lipoyl synthase.